Consider the following 1538-residue polypeptide: Ferredoxin-dependent glutamate synthase (1538 aa).

C34 acts as the For GATase activity in catalysis. One can recognise a Glutamine amidotransferase type-2 domain in the interval 34-431; it reads CGVGFIADVN…PGQMISVDIF (398 aa). An FMN-binding site is contributed by 1109-1166; it reads LSEVHQLLAENQLRDRVTLRVDGGLRTGSDIVLAAIMGAEEFGFGTVAMIATGCIMAR. 3 residues coordinate [3Fe-4S] cluster: C1162, C1168, and C1173.

The protein belongs to the glutamate synthase family. As to quaternary structure, monomer. [3Fe-4S] cluster serves as cofactor. It depends on FAD as a cofactor. The cofactor is FMN.

It is found in the plastid. The protein resides in the chloroplast stroma. It catalyses the reaction 2 oxidized [2Fe-2S]-[ferredoxin] + 2 L-glutamate = L-glutamine + 2 reduced [2Fe-2S]-[ferredoxin] + 2-oxoglutarate + 2 H(+). It participates in amino-acid biosynthesis; L-glutamate biosynthesis via GLT pathway; L-glutamate from 2-oxoglutarate and L-glutamine (ferredoxin route): step 1/1. The protein operates within energy metabolism; nitrogen metabolism. This Pyropia yezoensis (Susabi-nori) protein is Ferredoxin-dependent glutamate synthase (gltB).